Consider the following 222-residue polypeptide: UPF0758 protein YicR (222 aa).

In terms of domain architecture, MPN spans 100 to 222 (PLLSPEMTRE…YVSFAERGWI (123 aa)). The Zn(2+) site is built by H171, H173, and D184. Positions 171-184 (HNHPSGCAEPSKAD) match the JAMM motif motif.

Belongs to the UPF0758 family. YicR subfamily.

The protein is UPF0758 protein YicR of Shigella dysenteriae serotype 1 (strain Sd197).